Reading from the N-terminus, the 274-residue chain is D-aminoacyl-tRNA deacylase (274 aa).

The protein belongs to the DtdA deacylase family. Monomer. It depends on Zn(2+) as a cofactor.

It catalyses the reaction a D-aminoacyl-tRNA + H2O = a tRNA + a D-alpha-amino acid + H(+). The catalysed reaction is glycyl-tRNA(Ala) + H2O = tRNA(Ala) + glycine + H(+). Functionally, D-aminoacyl-tRNA deacylase with broad substrate specificity. By recycling D-aminoacyl-tRNA to D-amino acids and free tRNA molecules, this enzyme counteracts the toxicity associated with the formation of D-aminoacyl-tRNA entities in vivo. This Pyrococcus horikoshii (strain ATCC 700860 / DSM 12428 / JCM 9974 / NBRC 100139 / OT-3) protein is D-aminoacyl-tRNA deacylase.